Consider the following 1462-residue polypeptide: Gag-Pol polyprotein (1462 aa).

A lipid anchor (N-myristoyl glycine; by host) is attached at Gly-2. Positions 16–22 match the Nuclear export signal motif; sequence WESIRLK. A Nuclear localization signal motif is present at residues 26 to 32; it reads RKKYLIK. Composition is skewed to polar residues over residues 113 to 125 and 135 to 151; these read NNST…QRQN and PSGN…TPSG. The interval 113-153 is disordered; it reads NNSTATSSGQRQNAGEKEETVPPSGNTGNTGRATETPSGSR. At Tyr-155 the chain carries Phosphotyrosine; by host. 2 CCHC-type zinc fingers span residues 417–434 and 438–455; these read LQCF…NCRA and KGCW…DCTT. The disordered stretch occupies residues 482–513; the sequence is EHPREREGSGAGDSTDTSGANCPTTGDDDERR. The Peptidase A2 domain maps to 535-604; the sequence is CQALLDTGAD…TPINIIGRNI (70 aa). Residue Asp-540 is the For protease activity; shared with dimeric partner of the active site. Positions 658 to 848 constitute a Reverse transcriptase domain; sequence EGKISAVGPE…PPFMWMGYEL (191 aa). Asp-724, Asp-799, and Asp-800 together coordinate Mg(2+). An RT 'primer grip' region spans residues 841-849; that stretch reads FMWMGYELH. The short motif at 1012-1028 is the Tryptophan repeat motif element; that stretch reads WSQWWTDYWQVTWVPEW. An RNase H type-1 domain is found at 1048–1171; it reads IPEAETFYVD…VDKLVSKNIR (124 aa). Mg(2+) is bound by residues Asp-1057, Glu-1092, Asp-1112, and Asp-1163. The segment at 1177 to 1218 adopts an Integrase-type zinc-finger fold; it reads DGINEAQEDHDKYHSNWKALADEYNLPPVVAKEIIAQCPKCH. Zn(2+) is bound by residues His-1186, His-1190, Cys-1214, and Cys-1217. The Integrase catalytic domain occupies 1228 to 1378; it reads VDYSPEIWQI…TAGERLLDIL (151 aa). Mg(2+)-binding residues include Asp-1238 and Asp-1290. The integrase-type DNA-binding region spans 1397 to 1444; it reads FRVYYRDARDPIWKGPARLLWKGEGAVVIKEGEDIKVVPRRKAKIIKE.

In terms of assembly, homotrimer. Interacts with gp41 (via C-terminus). Homodimer. The active site consists of two apposed aspartic acid residues. As to quaternary structure, heterodimer of p66 RT and p51 RT (RT p66/p51). Heterodimerization of RT is essential for DNA polymerase activity. Despite the sequence identities, p66 RT and p51 RT have distinct folding. In terms of assembly, homotetramer; may further associate as a homohexadecamer. Mg(2+) is required as a cofactor. Post-translationally, specific enzymatic cleavages by the viral protease yield mature proteins. The protease is released by autocatalytic cleavage. The polyprotein is cleaved during and after budding, this process is termed maturation. Proteolytic cleavage of p66 RT removes the RNase H domain to yield the p51 RT subunit. Capsid protein p24 is phosphorylated.

The protein resides in the virion. The protein localises to the host nucleus. It localises to the host cytoplasm. Its subcellular location is the host cell membrane. It catalyses the reaction Specific for a P1 residue that is hydrophobic, and P1' variable, but often Pro.. The enzyme catalyses Endohydrolysis of RNA in RNA/DNA hybrids. Three different cleavage modes: 1. sequence-specific internal cleavage of RNA. Human immunodeficiency virus type 1 and Moloney murine leukemia virus enzymes prefer to cleave the RNA strand one nucleotide away from the RNA-DNA junction. 2. RNA 5'-end directed cleavage 13-19 nucleotides from the RNA end. 3. DNA 3'-end directed cleavage 15-20 nucleotides away from the primer terminus.. It carries out the reaction 3'-end directed exonucleolytic cleavage of viral RNA-DNA hybrid.. The catalysed reaction is DNA(n) + a 2'-deoxyribonucleoside 5'-triphosphate = DNA(n+1) + diphosphate. With respect to regulation, the viral protease is inhibited by many synthetic protease inhibitors (PIs), such as amprenavir, atazanavir, indinavir, loprinavir, nelfinavir, ritonavir and saquinavir. RT can be inhibited either by nucleoside RT inhibitors (NRTIs) or by non nucleoside RT inhibitors (NNRTIs). NRTIs act as chain terminators, whereas NNRTIs inhibit DNA polymerization by binding a small hydrophobic pocket near the RT active site and inducing an allosteric change in this region. Classical NRTIs are abacavir, adefovir (PMEA), didanosine (ddI), lamivudine (3TC), stavudine (d4T), tenofovir (PMPA), zalcitabine (ddC), and zidovudine (AZT). Classical NNRTIs are atevirdine (BHAP U-87201E), delavirdine, efavirenz (DMP-266), emivirine (I-EBU), and nevirapine (BI-RG-587). The tritherapies used as a basic effective treatment of AIDS associate two NRTIs and one NNRTI. Use of protease inhibitors in tritherapy regimens permit more ambitious therapeutic strategies. Functionally, gag-Pol polyprotein and Gag polyprotein may regulate their own translation, by the binding genomic RNA in the 5'-UTR. At low concentration, Gag-Pol and Gag would promote translation, whereas at high concentration, the polyproteins encapsidate genomic RNA and then shut off translation. In terms of biological role, matrix protein p17 has two main functions: in infected cell, it targets Gag and Gag-pol polyproteins to the plasma membrane via a multipartite membrane-binding signal, that includes its myristointegration complex. The myristoylation signal and the NLS exert conflicting influences its subcellular localization. The key regulation of these motifs might be phosphorylation of a portion of MA molecules on the C-terminal tyrosine at the time of virus maturation, by virion-associated cellular tyrosine kinase. Implicated in the release from host cell mediated by Vpu. Capsid protein p24 forms the conical core that encapsulates the genomic RNA-nucleocapsid complex in the virion. The core is constituted by capsid protein hexamer subunits. The core is disassembled soon after virion entry. Interaction with host PPIA/CYPA protects the virus from restriction by host TRIM5-alpha and from an unknown antiviral activity in host cells. This capsid restriction by TRIM5 is one of the factors which restricts SIV to the simian species. Its function is as follows. Nucleocapsid protein p7 encapsulates and protects viral dimeric unspliced (genomic) RNA. Binds these RNAs through its zinc fingers. Facilitates rearangement of nucleic acid secondary structure during retrotranscription of genomic RNA. This capability is referred to as nucleic acid chaperone activity. Functionally, the aspartyl protease mediates proteolytic cleavages of Gag and Gag-Pol polyproteins during or shortly after the release of the virion from the plasma membrane. Cleavages take place as an ordered, step-wise cascade to yield mature proteins. This process is called maturation. Displays maximal activity during the budding process just prior to particle release from the cell. Also cleaves Nef and Vif, probably concomitantly with viral structural proteins on maturation of virus particles. Hydrolyzes host EIF4GI and PABP1 in order to shut off the capped cellular mRNA translation. The resulting inhibition of cellular protein synthesis serves to ensure maximal viral gene expression and to evade host immune response. In terms of biological role, reverse transcriptase/ribonuclease H (RT) is a multifunctional enzyme that converts the viral dimeric RNA genome into dsDNA in the cytoplasm, shortly after virus entry into the cell. This enzyme displays a DNA polymerase activity that can copy either DNA or RNA templates, and a ribonuclease H (RNase H) activity that cleaves the RNA strand of RNA-DNA heteroduplexes in a partially processive 3' to 5' endonucleasic mode. Conversion of viral genomic RNA into dsDNA requires many steps. A tRNA binds to the primer-binding site (PBS) situated at the 5'-end of the viral RNA. RT uses the 3' end of the tRNA primer to perform a short round of RNA-dependent minus-strand DNA synthesis. The reading proceeds through the U5 region and ends after the repeated (R) region which is present at both ends of viral RNA. The portion of the RNA-DNA heteroduplex is digested by the RNase H, resulting in a ssDNA product attached to the tRNA primer. This ssDNA/tRNA hybridizes with the identical R region situated at the 3' end of viral RNA. This template exchange, known as minus-strand DNA strong stop transfer, can be either intra- or intermolecular. RT uses the 3' end of this newly synthesized short ssDNA to perform the RNA-dependent minus-strand DNA synthesis of the whole template. RNase H digests the RNA template except for two polypurine tracts (PPTs) situated at the 5'-end and near the center of the genome. It is not clear if both polymerase and RNase H activities are simultaneous. RNase H can probably proceed both in a polymerase-dependent (RNA cut into small fragments by the same RT performing DNA synthesis) and a polymerase-independent mode (cleavage of remaining RNA fragments by free RTs). Secondly, RT performs DNA-directed plus-strand DNA synthesis using the PPTs that have not been removed by RNase H as primers. PPTs and tRNA primers are then removed by RNase H. The 3' and 5' ssDNA PBS regions hybridize to form a circular dsDNA intermediate. Strand displacement synthesis by RT to the PBS and PPT ends produces a blunt ended, linear dsDNA copy of the viral genome that includes long terminal repeats (LTRs) at both ends. Integrase catalyzes viral DNA integration into the host chromosome, by performing a series of DNA cutting and joining reactions. This enzyme activity takes place after virion entry into a cell and reverse transcription of the RNA genome in dsDNA. The first step in the integration process is 3' processing. This step requires a complex comprising the viral genome, matrix protein, Vpr and integrase. This complex is called the pre-integration complex (PIC). The integrase protein removes 2 nucleotides from each 3' end of the viral DNA, leaving recessed CA OH's at the 3' ends. In the second step, the PIC enters cell nucleus. This process is mediated through integrase and Vpr proteins, and allows the virus to infect a non dividing cell. This ability to enter the nucleus is specific of lentiviruses, other retroviruses cannot and rely on cell division to access cell chromosomes. In the third step, termed strand transfer, the integrase protein joins the previously processed 3' ends to the 5' ends of strands of target cellular DNA at the site of integration. The 5'-ends are produced by integrase-catalyzed staggered cuts, 5 bp apart. A Y-shaped, gapped, recombination intermediate results, with the 5'-ends of the viral DNA strands and the 3' ends of target DNA strands remaining unjoined, flanking a gap of 5 bp. The last step is viral DNA integration into host chromosome. This involves host DNA repair synthesis in which the 5 bp gaps between the unjoined strands are filled in and then ligated. Since this process occurs at both cuts flanking the SIV genome, a 5 bp duplication of host DNA is produced at the ends of SIV integration. Alternatively, Integrase may catalyze the excision of viral DNA just after strand transfer, this is termed disintegration. This chain is Gag-Pol polyprotein (gag-pol), found in Simian immunodeficiency virus (isolate TAN1) (SIV-cpz).